The primary structure comprises 397 residues: MSERKLFTSESVSEGHPDKIADQISDAILDAILAEDPDAHVAAETAVYTGSVHIFGEVSTTAYVDINRVVRDTIAEIGYNNAEYGFAAESVGVHPSLIEQSPDIAQGVNESLEVRGTGDQDSLDLIGAGDQGLMFGFAIDETPEFMPLPVSLSHKLVKKLADLRKSGEISYLRPDAKSQVTVEYDENDQPVRVDTVVISTQHDPEATNDQIRHDVIEKVIKAVIPAEYLDEDTKFFINPTGRFVIGGPQGDSGLTGRKIIVDTYGGYSRHGGGAFSGKDATKVDRSASYAARYIAKNIVAAGLARKAEVQLAYAIGVANPVSVRVDTFGTATVAERKLESAVRDLFDLRPAGIIQMLDLKRPIYRQTAAYGHMGRTDVDLPWEKLDKVDALKAAVEA.

His-16 serves as a coordination point for ATP. Asp-18 contacts Mg(2+). Glu-44 serves as a coordination point for K(+). 2 residues coordinate L-methionine: Glu-57 and Gln-100. A flexible loop region spans residues 100–110 (QSPDIAQGVNE). ATP is bound by residues 175-177 (DAK), 242-243 (RF), Asp-251, 257-258 (RK), Ala-274, and Lys-278. Asp-251 lines the L-methionine pocket. Lys-282 contributes to the L-methionine binding site.

Belongs to the AdoMet synthase family. In terms of assembly, homotetramer; dimer of dimers. Requires Mg(2+) as cofactor. K(+) serves as cofactor.

The protein localises to the cytoplasm. The enzyme catalyses L-methionine + ATP + H2O = S-adenosyl-L-methionine + phosphate + diphosphate. It participates in amino-acid biosynthesis; S-adenosyl-L-methionine biosynthesis; S-adenosyl-L-methionine from L-methionine: step 1/1. Its function is as follows. Catalyzes the formation of S-adenosylmethionine (AdoMet) from methionine and ATP. The overall synthetic reaction is composed of two sequential steps, AdoMet formation and the subsequent tripolyphosphate hydrolysis which occurs prior to release of AdoMet from the enzyme. The sequence is that of S-adenosylmethionine synthase from Streptococcus thermophilus (strain CNRZ 1066).